The following is a 140-amino-acid chain: MYTKEYYWFSQYMIITSTLVLTIIWSILPSSLGEAAPKQFINTLLDIFPQRRWIITLESIMLMGMLCTYIGLLMYNEDTLTPPLDSLSTVTDAGGQLVIEDDPDVFVKKWAFKETSGIYDLSLMDACQLLYLYDNDHTST.

Residues 1–12 (MYTKEYYWFSQY) are Cytoplasmic-facing. The chain crosses the membrane as a helical span at residues 13–33 (MIITSTLVLTIIWSILPSSLG). Residues 34–52 (EAAPKQFINTLLDIFPQRR) lie on the Lumenal side of the membrane. Residues 53–73 (WIITLESIMLMGMLCTYIGLL) traverse the membrane as a helical segment. At 74–140 (MYNEDTLTPP…YLYDNDHTST (67 aa)) the chain is on the cytoplasmic side.

This sequence belongs to the GPI19 family. Component of the phosphatidylinositol N-acetylglucosaminyltransferase (GPI-GlcNAc transferase) complex composed of at least GPI1, GPI2, GPI3, GPI15, GPI19 and ERI1. Interacts with GPI2.

The protein resides in the endoplasmic reticulum membrane. The enzyme catalyses a 1,2-diacyl-sn-glycero-3-phospho-(1D-myo-inositol) + UDP-N-acetyl-alpha-D-glucosamine = a 6-(N-acetyl-alpha-D-glucosaminyl)-1-(1,2-diacyl-sn-glycero-3-phospho)-1D-myo-inositol + UDP + H(+). It participates in glycolipid biosynthesis; glycosylphosphatidylinositol-anchor biosynthesis. In terms of biological role, part of the complex catalyzing the transfer of N-acetylglucosamine from UDP-N-acetylglucosamine to phosphatidylinositol, the first step of GPI biosynthesis. Involved in cell wall biosynthesis. This is Phosphatidylinositol N-acetylglucosaminyltransferase subunit GPI19 (GPI19) from Saccharomyces cerevisiae (strain ATCC 204508 / S288c) (Baker's yeast).